The sequence spans 1174 residues: K(+) efflux antiporter 2, chloroplastic (1174 aa).

Residues 1–57 (MDFASSVQRQSMFHGGADFASYCLPNRMISAKLCPKGLGGTRFWDPMIDSKVRSAIR) constitute a chloroplast transit peptide. Topologically, residues 58 to 565 (SKRNVSYRSS…MFPQQEVNEE (508 aa)) are stromal. The disordered stretch occupies residues 119–141 (GSDDREVTFSKEEKDTREQDSAP). Residues 142 to 350 (SLEELRDLLN…ALQRAEKTLF (209 aa)) adopt a coiled-coil conformation. Residue Lys-170 is modified to N6-acetyllysine; by NSI. Over residues 420–448 (EAEGEAEKSKNVVLTKKQEVQKDLPRESS) the composition is skewed to basic and acidic residues. Residues 420 to 457 (EAEGEAEKSKNVVLTKKQEVQKDLPRESSSHNGTKTSL) are disordered. The chain crosses the membrane as a helical span at residues 566-586 (EASLLDVLWLLLASVIFVPLF). Residues 587–592 (QKIPGG) lie on the Chloroplast intermembrane side of the membrane. A helical membrane pass occupies residues 593–613 (SPVLGYLAAGILIGPYGLSII). Residues 614-620 (RNVHGTK) are Stromal-facing. Residues 621 to 641 (AIAEFGVVFLLFNIGLELSVE) form a helical membrane-spanning segment. Over 642 to 648 (RLSSMKK) the chain is Chloroplast intermembrane. A helical transmembrane segment spans residues 649–669 (YVFGLGSAQVLVTAAVIGLIT). The Stromal segment spans residues 670–678 (HYVAGQAGP). A helical transmembrane segment spans residues 679-699 (AAIVIGNGLALSSTAVVLQVL). Residues 700-713 (QERGESTSRHGRAT) are Chloroplast intermembrane-facing. Residues 714–734 (FSVLLFQDLAVVVLLILIPLI) traverse the membrane as a helical segment. Residues 735 to 746 (SPNSSKGGIGFQ) lie on the Stromal side of the membrane. Residues 747–767 (AIAEALGLAAIKAAVAITGII) traverse the membrane as a helical segment. The Chloroplast intermembrane segment spans residues 768–807 (AGGRLLLRPIYKQIAENRNAEIFSANTLLVILGTSLLTAR). The chain crosses the membrane as a helical span at residues 808-828 (AGLSMALGAFLAGLLLAETEF). Topologically, residues 829–841 (SLQVESDIAPYRG) are stromal. Residues 842–862 (LLLGLFFMTVGMSIDPKLLLA) form a helical membrane-spanning segment. Over 863-865 (NFP) the chain is Chloroplast intermembrane. Residues 866–886 (LIMGTLGLLLVGKTILVVIIG) form a helical membrane-spanning segment. The Stromal segment spans residues 887-898 (KLFGISIISAVR). The helical transmembrane segment at 899 to 919 (VGLLLAPGGEFAFVAFGEAVN) threads the bilayer. The Chloroplast intermembrane segment spans residues 920–928 (QGIMTPQLS). A helical membrane pass occupies residues 929 to 949 (SLLFLVVGISMALTPWLAAGG). At 950 to 1174 (QLIASRFELQ…NQIIEGTLAI (225 aa)) the chain is on the stromal side. The region spanning 975 to 1092 (QGHIIICGFG…EKAGATAVVP (118 aa)) is the RCK N-terminal domain. Residues 1141-1174 (SLGYGFSRSTSKPKPPSPSETSDDNQIIEGTLAI) are disordered.

Belongs to the monovalent cation:proton antiporter 2 (CPA2) transporter (TC 2.A.37) family. KEA (TC 2.A.37.1) subfamily. Acetylated at Lys-170 by the stromal acetyltransferase enzyme NSI. In terms of tissue distribution, detected in leaves, stems and flowers. Expressed in shoots and roots. Mainly localized to leaf veins, hypocotyls, mesophylls and guard cells. Accumulates at high levels in small and dividing plastids (at protein level).

It localises to the plastid. The protein resides in the chloroplast inner membrane. It is found in the plastid inner membrane. It catalyses the reaction K(+)(in) + H(+)(out) = K(+)(out) + H(+)(in). Repressed by sodium ions Na(+). Electroneutral K(+)/H(+) efflux antiporter modulating monovalent cation and pH homeostasis in plastids, especially during plastid division and thylakoid membrane formation. Transports K(+) and Cs(+) preferentially relative to Na(+) or Li(+). May function in osmotic adjustment. Collaboratively with KEA1, adjusts alkaline stromal pH upon light to dark transitions in plastids. Together with KEA1, critical for chloroplast development, including chloroplast RNA-metabolism (e.g. rRNA maturation, polysome loading and RNA-protein interactions) and plastid gene expression (PGE), ion homeostasis, and photosynthesis. Contributes, during early seedling development, to the regulation of photosynthesis and abscisic acid- (ABA-) mediated primary root growth in a sucrose-dependent manner. Involved in the regulation of reactive oxygen and nitrogen species (ROS and RNS) metabolism. Required in roots for rapid hyperosmotic-induced Ca(2+) responses and for osmo-sensory potentiation in hyperosmotic conditions. May counteract resilience to drought and salt stress, involving photorespiratory pathway and stomata closure. This Arabidopsis thaliana (Mouse-ear cress) protein is K(+) efflux antiporter 2, chloroplastic.